A 156-amino-acid polypeptide reads, in one-letter code: Flagellar assembly factor FliW (156 aa).

It belongs to the FliW family. As to quaternary structure, interacts with translational regulator CsrA and flagellin(s).

It localises to the cytoplasm. Acts as an anti-CsrA protein, binds CsrA and prevents it from repressing translation of its target genes, one of which is flagellin. Binds to flagellin and participates in the assembly of the flagellum. The polypeptide is Flagellar assembly factor FliW (Pseudothermotoga lettingae (strain ATCC BAA-301 / DSM 14385 / NBRC 107922 / TMO) (Thermotoga lettingae)).